A 321-amino-acid chain; its full sequence is Glycerol-3-phosphate phosphatase (321 aa).

The active-site Nucleophile is D34. The Mg(2+) site is built by D34, D36, and D260. D36 functions as the Proton donor in the catalytic mechanism.

It belongs to the HAD-like hydrolase superfamily. CbbY/CbbZ/Gph/YieH family. As to quaternary structure, homodimer. Mg(2+) is required as a cofactor. Expression was confirmed in liver, adipose tissue, testis and pancreatic islet.

The enzyme catalyses O-phospho-L-tyrosyl-[protein] + H2O = L-tyrosyl-[protein] + phosphate. It carries out the reaction sn-glycerol 1-phosphate + H2O = glycerol + phosphate. The catalysed reaction is sn-glycerol 3-phosphate + H2O = glycerol + phosphate. Functionally, glycerol-3-phosphate phosphatase hydrolyzing glycerol-3-phosphate into glycerol. Thereby, regulates the cellular levels of glycerol-3-phosphate a metabolic intermediate of glucose, lipid and energy metabolism. Was also shown to have a 2-phosphoglycolate phosphatase activity and a tyrosine-protein phosphatase activity. However, their physiological relevance is unclear. In vitro, also has a phosphatase activity toward ADP, ATP, GDP and GTP. In Rattus norvegicus (Rat), this protein is Glycerol-3-phosphate phosphatase.